The sequence spans 187 residues: Orotate phosphoribosyltransferase (187 aa).

110-118 (EDVVTTGGS) is a 5-phospho-alpha-D-ribose 1-diphosphate binding site. Orotate contacts are provided by threonine 114 and arginine 142.

Belongs to the purine/pyrimidine phosphoribosyltransferase family. PyrE subfamily. In terms of assembly, homodimer. The cofactor is Mg(2+).

It carries out the reaction orotidine 5'-phosphate + diphosphate = orotate + 5-phospho-alpha-D-ribose 1-diphosphate. It participates in pyrimidine metabolism; UMP biosynthesis via de novo pathway; UMP from orotate: step 1/2. Functionally, catalyzes the transfer of a ribosyl phosphate group from 5-phosphoribose 1-diphosphate to orotate, leading to the formation of orotidine monophosphate (OMP). The sequence is that of Orotate phosphoribosyltransferase from Thermotoga neapolitana (strain ATCC 49049 / DSM 4359 / NBRC 107923 / NS-E).